A 293-amino-acid polypeptide reads, in one-letter code: Neugrin (293 aa).

A signal peptide spans 1 to 18 (MALSLSLFLGGRVRTSLA). A Phosphoserine modification is found at Ser-41. 2 disordered regions span residues 177-210 (DEVS…EGRD) and 224-254 (TTAL…TLPS). N-linked (GlcNAc...) asparagine glycosylation occurs at Asn-185. Basic and acidic residues predominate over residues 198–210 (HSTDAQKKREGRD).

The protein belongs to the neugrin family. Forms a regulatory protein-RNA complex, consisting of RCC1L, NGRN, RPUSD3, RPUSD4, TRUB2, FASTKD2 and 16S mt-rRNA. Interacts with 16S mt-rRNA; this interaction is direct. In terms of tissue distribution, expressed in heart, brain, liver and kidney. In brain, mainly expressed in neurons rather than glial cells.

Its subcellular location is the nucleus. It localises to the secreted. It is found in the mitochondrion membrane. Functionally, plays an essential role in mitochondrial ribosome biogenesis. As a component of a functional protein-RNA module, consisting of RCC1L, NGRN, RPUSD3, RPUSD4, TRUB2, FASTKD2 and 16S mitochondrial ribosomal RNA (16S mt-rRNA), controls 16S mt-rRNA abundance and is required for intra-mitochondrial translation of core subunits of the oxidative phosphorylation system. In Mus musculus (Mouse), this protein is Neugrin (Ngrn).